Consider the following 541-residue polypeptide: Tyrosine-protein kinase Yes (541 aa).

Positions 1–20 (MGCIKSKEDKGPAMKYRTDN) are enriched in basic and acidic residues. Residues 1–43 (MGCIKSKEDKGPAMKYRTDNTPEPISSHVSHYGSDSSQATQSP) are disordered. The N-myristoyl glycine moiety is linked to residue Gly-2. Cys-3 carries S-palmitoyl cysteine; in membrane form lipidation. Low complexity predominate over residues 26 to 37 (SSHVSHYGSDSS). The 62-residue stretch at 89 to 150 (GGVTVFVALY…PSNYVAPADS (62 aa)) folds into the SH3 domain. An SH2 domain is found at 156–253 (WYFGKMGRKD…GLCHKLTTVC (98 aa)). Positions 275-528 (LRLEVKLGQG…YIQSFLEDYF (254 aa)) constitute a Protein kinase domain. Residues 281–289 (LGQGCFGEV) and Lys-303 contribute to the ATP site. Asp-394 functions as the Proton acceptor in the catalytic mechanism. Tyr-424 carries the phosphotyrosine; by autocatalysis modification. Phosphotyrosine; by CSK is present on Tyr-535.

This sequence belongs to the protein kinase superfamily. Tyr protein kinase family. SRC subfamily. Post-translationally, autophosphorylation at Tyr-424 maintains enzyme activity. Palmitoylation at Cys-3 promotes membrane localization.

Its subcellular location is the cell membrane. It is found in the cytoplasm. It localises to the cytoskeleton. The protein resides in the microtubule organizing center. The protein localises to the centrosome. Its subcellular location is the cytosol. It is found in the cell junction. It carries out the reaction L-tyrosyl-[protein] + ATP = O-phospho-L-tyrosyl-[protein] + ADP + H(+). Its function is as follows. Non-receptor protein tyrosine kinase that is involved in the regulation of cell growth and survival, apoptosis, cell-cell adhesion, cytoskeleton remodeling, differentiation, G2/M progression and cytokinesis. The protein is Tyrosine-protein kinase Yes (YES1) of Gallus gallus (Chicken).